Reading from the N-terminus, the 159-residue chain is Ribosomal RNA large subunit methyltransferase H (159 aa).

S-adenosyl-L-methionine is bound by residues leucine 76, glycine 108, and 127 to 132; that span reads MSKMTF.

Belongs to the RNA methyltransferase RlmH family. As to quaternary structure, homodimer.

The protein localises to the cytoplasm. It carries out the reaction pseudouridine(1915) in 23S rRNA + S-adenosyl-L-methionine = N(3)-methylpseudouridine(1915) in 23S rRNA + S-adenosyl-L-homocysteine + H(+). Its function is as follows. Specifically methylates the pseudouridine at position 1915 (m3Psi1915) in 23S rRNA. The sequence is that of Ribosomal RNA large subunit methyltransferase H from Ureaplasma parvum serovar 3 (strain ATCC 27815 / 27 / NCTC 11736).